The sequence spans 133 residues: Large ribosomal subunit protein bL19 (133 aa).

The protein belongs to the bacterial ribosomal protein bL19 family.

Its function is as follows. This protein is located at the 30S-50S ribosomal subunit interface and may play a role in the structure and function of the aminoacyl-tRNA binding site. In Stenotrophomonas maltophilia (strain R551-3), this protein is Large ribosomal subunit protein bL19.